A 218-amino-acid polypeptide reads, in one-letter code: Phosphatidylserine decarboxylase proenzyme (218 aa).

Serine 187 serves as the catalytic Schiff-base intermediate with substrate; via pyruvic acid. Pyruvic acid (Ser); by autocatalysis is present on serine 187.

Belongs to the phosphatidylserine decarboxylase family. PSD-A subfamily. As to quaternary structure, heterodimer of a large membrane-associated beta subunit and a small pyruvoyl-containing alpha subunit. Pyruvate serves as cofactor. In terms of processing, is synthesized initially as an inactive proenzyme. Formation of the active enzyme involves a self-maturation process in which the active site pyruvoyl group is generated from an internal serine residue via an autocatalytic post-translational modification. Two non-identical subunits are generated from the proenzyme in this reaction, and the pyruvate is formed at the N-terminus of the alpha chain, which is derived from the carboxyl end of the proenzyme. The post-translation cleavage follows an unusual pathway, termed non-hydrolytic serinolysis, in which the side chain hydroxyl group of the serine supplies its oxygen atom to form the C-terminus of the beta chain, while the remainder of the serine residue undergoes an oxidative deamination to produce ammonia and the pyruvoyl prosthetic group on the alpha chain.

It localises to the cell membrane. It catalyses the reaction a 1,2-diacyl-sn-glycero-3-phospho-L-serine + H(+) = a 1,2-diacyl-sn-glycero-3-phosphoethanolamine + CO2. The protein operates within phospholipid metabolism; phosphatidylethanolamine biosynthesis; phosphatidylethanolamine from CDP-diacylglycerol: step 2/2. Its function is as follows. Catalyzes the formation of phosphatidylethanolamine (PtdEtn) from phosphatidylserine (PtdSer). The polypeptide is Phosphatidylserine decarboxylase proenzyme (Geobacter sulfurreducens (strain ATCC 51573 / DSM 12127 / PCA)).